We begin with the raw amino-acid sequence, 286 residues long: TGESYAGHYIPALASRIHQGNQANEGIHINLKGLAIGNGLTNPAIQYKGYPDYALDMGIITQTTHDLLGKVLVPACELAIKLCGTNGKVSCLTANVACNLIFSDIMLHAGGVNYYDIRKKCEGSLCYDFSNMEKFLNQESVRDSLGVGKIRFVSCSTEVYMAMLVDWMRNLEVGIPLLLEDGINLLIYAGEYDLICNWLGNSRWVHAMKWSGQKEFVASSDVPFVVNGSQAGLLKSYGPLSFLKVHDAGHMVPMDQPKAALEMVKQWTRGTLAESIDGEEKLVADM.

Ser4 is a catalytic residue. Disulfide bonds link Cys83–Cys98 and Cys121–Cys126. The active site involves Asp193. Cys196 lines the substrate pocket. An N-linked (GlcNAc...) asparagine glycan is attached at Asn227. The active site involves His250.

This sequence belongs to the peptidase S10 family.

Functionally, involved in degradation of small peptides. This Pisum sativum (Garden pea) protein is Serine carboxypeptidase-like.